Consider the following 139-residue polypeptide: Small ribosomal subunit protein uS12 (139 aa).

The disordered stretch occupies residues 1–21 (MSTVSQLIKKRRSSKTSKTKA). Residues 8–18 (IKKRRSSKTSK) are compositionally biased toward basic residues. Asp-102 bears the 3-methylthioaspartic acid mark.

This sequence belongs to the universal ribosomal protein uS12 family. Part of the 30S ribosomal subunit. Contacts proteins S8 and S17. May interact with IF1 in the 30S initiation complex.

In terms of biological role, with S4 and S5 plays an important role in translational accuracy. Its function is as follows. Interacts with and stabilizes bases of the 16S rRNA that are involved in tRNA selection in the A site and with the mRNA backbone. Located at the interface of the 30S and 50S subunits, it traverses the body of the 30S subunit contacting proteins on the other side and probably holding the rRNA structure together. The combined cluster of proteins S8, S12 and S17 appears to hold together the shoulder and platform of the 30S subunit. The polypeptide is Small ribosomal subunit protein uS12 (Aster yellows witches'-broom phytoplasma (strain AYWB)).